The chain runs to 288 residues: Bifunctional protein FolD (288 aa).

NADP(+) contacts are provided by residues 166–168 (GRS), S191, and V232.

This sequence belongs to the tetrahydrofolate dehydrogenase/cyclohydrolase family. Homodimer.

The enzyme catalyses (6R)-5,10-methylene-5,6,7,8-tetrahydrofolate + NADP(+) = (6R)-5,10-methenyltetrahydrofolate + NADPH. It carries out the reaction (6R)-5,10-methenyltetrahydrofolate + H2O = (6R)-10-formyltetrahydrofolate + H(+). It participates in one-carbon metabolism; tetrahydrofolate interconversion. Its function is as follows. Catalyzes the oxidation of 5,10-methylenetetrahydrofolate to 5,10-methenyltetrahydrofolate and then the hydrolysis of 5,10-methenyltetrahydrofolate to 10-formyltetrahydrofolate. The sequence is that of Bifunctional protein FolD from Roseiflexus sp. (strain RS-1).